The following is a 424-amino-acid chain: Enolase (424 aa).

(2R)-2-phosphoglycerate is bound at residue Gln165. Glu207 serves as the catalytic Proton donor. The Mg(2+) site is built by Asp244, Glu283, and Asp310. Positions 335, 364, 365, and 386 each coordinate (2R)-2-phosphoglycerate. The active-site Proton acceptor is the Lys335.

Belongs to the enolase family. Requires Mg(2+) as cofactor.

It is found in the cytoplasm. Its subcellular location is the secreted. The protein localises to the cell surface. It catalyses the reaction (2R)-2-phosphoglycerate = phosphoenolpyruvate + H2O. It participates in carbohydrate degradation; glycolysis; pyruvate from D-glyceraldehyde 3-phosphate: step 4/5. Its function is as follows. Catalyzes the reversible conversion of 2-phosphoglycerate (2-PG) into phosphoenolpyruvate (PEP). It is essential for the degradation of carbohydrates via glycolysis. In Chlamydia abortus (strain DSM 27085 / S26/3) (Chlamydophila abortus), this protein is Enolase.